Consider the following 705-residue polypeptide: CAP-Gly domain-containing linker protein 4 (705 aa).

3 ANK repeats span residues 65-101, 149-180, and 186-215; these read TSVS…NVND, TNMN…DVDA, and NFGT…NPAF. Positions 303–345 constitute a CAP-Gly 1 domain; sequence GTTEFASGQWAGIELDEPEGKNNGSVGKVQYFKCAPKYGIFAP. Disordered regions lie at residues 391–410 and 431–479; these read MTSK…PGEE and TSSL…ANNS. A compositionally biased stretch (polar residues) spans 441–452; sequence PKKQNAISSNKK. The span at 455 to 479 shows a compositional bias: low complexity; it reads SKSPSLSSRASAGLNSSATSTANNS. Positions 505–547 constitute a CAP-Gly 2 domain; sequence GTTNFAPGYWYGIELEKPHGKNDGSVGGVQYFSCSPRYGIFAP. A phosphoserine mark is found at Ser-557 and Ser-609. One can recognise a CAP-Gly 3 domain in the interval 644-686; the sequence is GPTDFASGIWLGLELRSAKGKNDGSVGDKRYFTCKPNHGVLVR.

The chain is CAP-Gly domain-containing linker protein 4 (CLIP4) from Homo sapiens (Human).